Here is a 252-residue protein sequence, read N- to C-terminus: MERLLIVNADDFGLSKGQNYGIIEACRNGIVTSTTALVNGQAIDHAVQLSRDEPSLAIGMHFVLTMGKPLTAMPGLTRDGVLGKWIWQLAEEDALPLEEITQELASQYLRFIELFGRKPTHLDSHHHVHMFPQIFPIVARFAAEEGIALRIDRQPLSNAGDLPANLRSSQGFSSAFYGEEISEALFLQVLDDASHRGDRSLEVMCHPAFIDNTIRQSAYCFPRLTELEVLTSASLKYAIAERGYRLGSYLNV.

Residues His-61 and His-125 each contribute to the Mg(2+) site.

It belongs to the YdjC deacetylase family. ChbG subfamily. Homodimer. Mg(2+) is required as a cofactor.

The protein localises to the cytoplasm. The catalysed reaction is N,N'-diacetylchitobiose + H2O = N-acetyl-beta-D-glucosaminyl-(1-&gt;4)-D-glucosamine + acetate. It catalyses the reaction diacetylchitobiose-6'-phosphate + H2O = N'-monoacetylchitobiose-6'-phosphate + acetate. It participates in glycan degradation; chitin degradation. Its function is as follows. Involved in the degradation of chitin. ChbG is essential for growth on the acetylated chitooligosaccharides chitobiose and chitotriose but is dispensable for growth on cellobiose and chitosan dimer, the deacetylated form of chitobiose. Deacetylation of chitobiose-6-P and chitotriose-6-P is necessary for both the activation of the chb promoter by the regulatory protein ChbR and the hydrolysis of phosphorylated beta-glucosides by the phospho-beta-glucosidase ChbF. Catalyzes the removal of only one acetyl group from chitobiose-6-P to yield monoacetylchitobiose-6-P, the inducer of ChbR and the substrate of ChbF. In Escherichia coli O139:H28 (strain E24377A / ETEC), this protein is Chitooligosaccharide deacetylase.